The sequence spans 69 residues: Alpha-elapitoxin-Lc2c (69 aa).

4 disulfides stabilise this stretch: cysteine 3-cysteine 20, cysteine 13-cysteine 41, cysteine 45-cysteine 56, and cysteine 57-cysteine 62.

This sequence belongs to the three-finger toxin family. Long-chain subfamily. Type II alpha-neurotoxin sub-subfamily. In terms of tissue distribution, expressed by the venom gland.

It is found in the secreted. In terms of biological role, binds with high affinity to muscular nicotinic acetylcholine receptors (nAChRs), whereas it binds with a low affinity to neuronal alpha-7/CHRNA7 nAChRs. This chain is Alpha-elapitoxin-Lc2c, found in Laticauda colubrina (Yellow-lipped sea krait).